Here is a 456-residue protein sequence, read N- to C-terminus: Phosphomethylpyrimidine synthase (456 aa).

Substrate is bound by residues Asn80, Met109, Tyr139, His175, 195-197 (SRG), 236-239 (DSLR), and Glu275. His279 contributes to the Zn(2+) binding site. Tyr302 contributes to the substrate binding site. His343 lines the Zn(2+) pocket. Cys423, Cys426, and Cys431 together coordinate [4Fe-4S] cluster.

Belongs to the ThiC family. Requires [4Fe-4S] cluster as cofactor.

It carries out the reaction 5-amino-1-(5-phospho-beta-D-ribosyl)imidazole + S-adenosyl-L-methionine = 4-amino-2-methyl-5-(phosphooxymethyl)pyrimidine + CO + 5'-deoxyadenosine + formate + L-methionine + 3 H(+). The protein operates within cofactor biosynthesis; thiamine diphosphate biosynthesis. Catalyzes the synthesis of the hydroxymethylpyrimidine phosphate (HMP-P) moiety of thiamine from aminoimidazole ribotide (AIR) in a radical S-adenosyl-L-methionine (SAM)-dependent reaction. This chain is Phosphomethylpyrimidine synthase, found in Prochlorococcus marinus (strain MIT 9301).